The primary structure comprises 73 residues: Antimicrobial peptide TsAP-2 (73 aa).

The signal sequence occupies residues M1 to A22. K39 is modified (lysine amide). Positions E45 to Y73 are excised as a propeptide.

The protein belongs to the non-disulfide-bridged peptide (NDBP) superfamily. Short antimicrobial peptide (group 4) family. Expressed by the venom gland.

The protein localises to the secreted. In terms of biological role, antimicrobial peptide. Has a high antibacterial activity against the Gram-positive bacterium S.aureus (MIC=5-17.30 uM), the methicillin-resistant S.aureus (MRSA) (MIC=17.30 uM), and E.faecalis (MIC=69.23 uM). Has antifungal activity against Candida spp. and one Cryptococcus neoformans strains with MICs values ranging from 6.25 to 100 uM. Also shows an inhibitory activity on C.albicans biofilms at high concentrations. Has a moderate hemolytic potency (18% at 20 uM). Also inhibits the growth of the five human cancer cell lines tested (the squamous carcinoma cell line H157 (IC(50)=4.1 uM), the lung adenocarcinoma cell line H838 (11.0 uM), the breast carcinoma cell line MCF-7 (6.4 uM), the androgen-independent prostate adenocarcinoma cell line PC3 (13.3 uM) and the glioblastoma cell line U251-MG (15.4 uM)). In the model of polymicrobial sepsis, it exhibits an antibiotic effect, reducing the levels of microorganisms in the infectious focus and the inflammatory responses in the lung and cecum of septic animals. The sequence is that of Antimicrobial peptide TsAP-2 from Tityus serrulatus (Brazilian scorpion).